Reading from the N-terminus, the 120-residue chain is NADH-quinone oxidoreductase subunit A (120 aa).

Helical transmembrane passes span 6–26, 63–83, and 89–109; these read YGII…ALAT, FLYA…YPWA, and LGLF…LGLW.

The protein belongs to the complex I subunit 3 family. In terms of assembly, NDH-1 is composed of 14 different subunits. Subunits NuoA, H, J, K, L, M, N constitute the membrane sector of the complex.

The protein localises to the cell membrane. It catalyses the reaction a quinone + NADH + 5 H(+)(in) = a quinol + NAD(+) + 4 H(+)(out). Its function is as follows. NDH-1 shuttles electrons from NADH, via FMN and iron-sulfur (Fe-S) centers, to quinones in the respiratory chain. The immediate electron acceptor for the enzyme in this species is believed to be a menaquinone. Couples the redox reaction to proton translocation (for every two electrons transferred, four hydrogen ions are translocated across the cytoplasmic membrane), and thus conserves the redox energy in a proton gradient. This chain is NADH-quinone oxidoreductase subunit A, found in Moorella thermoacetica (strain ATCC 39073 / JCM 9320).